Consider the following 727-residue polypeptide: MLLALGLTLVLYASLQAEENSFTINSIHMESLPSWEVMNGQQLTLECLVDISTTSKSRSQHRVLFYKDDAMVYNVTSREHTESYVIPQARVFHSGKYKCTVMLNNKEKTTIEYEVKVHGVSKPKVTLDKKEVTEGGVVTVNCSLQEEKPPIFFKIEKLEVGTKFVKRRIDKTSNENFVLMEFPIEAQDHVLVFRCQAGILSGFKLQESEPIRSEYVTVQESFSTPKFEIKPPGMIIEGDQLHIRCIVQVTHLVQEFTEIIIQKDKAIVATSKQSSEAVYSVMAMVEYSGHYTCKVESNRISKASSIMVNITELFPKPKLEFSSSRLDQGELLDLSCSVSGTPVANFTIQKEETVLSQYQNFSKIAEESDSGEYSCTAGIGKVVKRSGLVPIQVCEMLSKPSIFHDAKSEIIKGHAIGISCQSENGTAPITYHLMKAKSDFQTLEVTSNDPATFTDKPTRDMEYQCRADNCHSHPAVFSEILRVRVIAPVDEVVISILSSNEVQSGSEMVLRCSVKEGTSPITFQFYKEKEDRPFHQAVVNDTQAFWHNKQASKKQEGQYYCTASNRASSMRTSPRSSTLAVRVFLAPWKKGLIAVVVIGVVIATLIVAAKCYFLRKAKAKQKPVEMSRPAAPLLNSNSEKISEPSVEANSHYGYDDVSGNDAVKPINQNKDPQNMDVEYTEVEVSSLEPHQALGTRATETVYSEIRKVDPNLMENRYSRTEGSLNGT.

The signal sequence occupies residues 1-17 (MLLALGLTLVLYASLQA). The Extracellular portion of the chain corresponds to 18-590 (EENSFTINSI…VRVFLAPWKK (573 aa)). Ig-like C2-type domains are found at residues 40–126 (GQQL…PKVT), 135–213 (GGVV…PIRS), 225–309 (PKFE…IMVN), 315–391 (PKPK…LVPI), 413–472 (GHAI…NCHS), and 488–578 (PVDE…RSST). A disulfide bridge links Cys-47 with Cys-99. N-linked (GlcNAc...) asparagine glycans are attached at residues Asn-74 and Asn-141. 2 cysteine pairs are disulfide-bonded: Cys-142–Cys-195 and Cys-245–Cys-293. Asn-309, Asn-345, Asn-360, Asn-424, and Asn-540 each carry an N-linked (GlcNAc...) asparagine glycan. 3 cysteine pairs are disulfide-bonded: Cys-336/Cys-375, Cys-420/Cys-465, and Cys-512/Cys-561. A helical membrane pass occupies residues 591–609 (GLIAVVVIGVVIATLIVAA). The Cytoplasmic segment spans residues 610–727 (KCYFLRKAKA…SRTEGSLNGT (118 aa)). Residue Cys-611 is the site of S-palmitoyl cysteine attachment. The segment at 642-672 (SEPSVEANSHYGYDDVSGNDAVKPINQNKDP) is disordered. 2 short sequence motifs (ITIM motif) span residues 677–682 (VEYTEV) and 700–705 (TVYSEI). Phosphotyrosine; by FER is present on residues Tyr-679 and Tyr-702. The interval 698–718 (TETVYSEIRKVDPNLMENRYS) is membrane-bound segment which detaches upon phosphorylation. The tract at residues 710–727 (PNLMENRYSRTEGSLNGT) is may play a role in cytoprotective signaling. Residues Ser-718 and Ser-723 each carry the phosphoserine modification.

Trans-homodimer (via Ig-like C2-type 1 and Ig-like C2-type 2 domains); trans-homodimerization is required for cell-cell interaction. Forms a complex with BDKRB2 and GNAQ. Interacts with BDKRB2 and GNAQ. Interacts with PTPN11; Tyr-702 is critical for PTPN11 recruitment. Interacts with FER. Interacts with CD177; the interaction is Ca(2+)-dependent; the interaction is direct. Post-translationally, phosphorylated on Ser and Tyr residues by src kinases after cellular activation. Upon activation, phosphorylated on Ser-718 which probably initiates the dissociation of the membrane-interaction segment (residues 698-718) from the cell membrane allowing the sequential phosphorylation of Tyr-702 and Tyr-679. Constitutively phosphorylated on Ser-723 in resting platelets. Phosphorylated on tyrosine residues by FER and FES in response to FCER1 activation. In endothelial cells Fyn mediates mechanical-force (stretch or pull) induced tyrosine phosphorylation. Palmitoylation by ZDHHC21 is necessary for cell surface expression in endothelial cells and enrichment in membrane rafts. Expressed in lung and platelets (at protein level).

Its subcellular location is the cell membrane. The protein localises to the membrane raft. The protein resides in the cell junction. Functionally, cell adhesion molecule which is required for leukocyte transendothelial migration (TEM) under most inflammatory conditions. Tyr-679 plays a critical role in TEM and is required for efficient trafficking of PECAM1 to and from the lateral border recycling compartment (LBRC) and is also essential for the LBRC membrane to be targeted around migrating leukocytes. Trans-homophilic interaction may play a role in endothelial cell-cell adhesion via cell junctions. Heterophilic interaction with CD177 plays a role in transendothelial migration of neutrophils. Homophilic ligation of PECAM1 prevents macrophage-mediated phagocytosis of neighboring viable leukocytes by transmitting a detachment signal. Promotes macrophage-mediated phagocytosis of apoptotic leukocytes by tethering them to the phagocytic cells; PECAM1-mediated detachment signal appears to be disabled in apoptotic leukocytes. Modulates bradykinin receptor BDKRB2 activation. Regulates bradykinin- and hyperosmotic shock-induced ERK1/2 activation in endothelial cells. Induces susceptibility to atherosclerosis. In Mus musculus (Mouse), this protein is Platelet endothelial cell adhesion molecule (Pecam1).